The primary structure comprises 368 residues: Dihydroorotate dehydrogenase (quinone) (368 aa).

FMN is bound by residues A67–K71 and T91. K71 serves as a coordination point for substrate. N116–F120 is a substrate binding site. N146 and N179 together coordinate FMN. N179 contributes to the substrate binding site. S182 (nucleophile) is an active-site residue. Residue N184 coordinates substrate. Residues K222 and T250 each contribute to the FMN site. N251 to T252 is a binding site for substrate. Residues G276, G305, and Y326–S327 contribute to the FMN site.

It belongs to the dihydroorotate dehydrogenase family. Type 2 subfamily. As to quaternary structure, monomer. FMN is required as a cofactor.

It is found in the cell membrane. The catalysed reaction is (S)-dihydroorotate + a quinone = orotate + a quinol. It participates in pyrimidine metabolism; UMP biosynthesis via de novo pathway; orotate from (S)-dihydroorotate (quinone route): step 1/1. In terms of biological role, catalyzes the conversion of dihydroorotate to orotate with quinone as electron acceptor. This chain is Dihydroorotate dehydrogenase (quinone), found in Streptomyces avermitilis (strain ATCC 31267 / DSM 46492 / JCM 5070 / NBRC 14893 / NCIMB 12804 / NRRL 8165 / MA-4680).